The primary structure comprises 365 residues: Annexin B22 (365 aa).

4 Annexin repeats span residues 34-105 (FSAS…QLIV), 106-185 (DTPY…SLVQ), 211-283 (ELAE…AVLR), and 287-358 (DRPS…VLMG). Met47, Gly49, Gly51, Thr52, Glu54, Asp91, Met119, Gly121, Gly123, Asp126, Lys169, Glu171, Thr172, Glu177, Asp273, Met300, Gly302, Leu303, Gly304, and Asp344 together coordinate Ca(2+).

This sequence belongs to the annexin family. Homodimer.

It is found in the tegument. Its subcellular location is the secreted. It localises to the extracellular exosome. The protein localises to the host cell. Involved in reproduction of the worm. Involved in host-parasite interaction. Delivered into the host cell by means of parasite exosomes. Binds to acidic phospholipid membranes in a calcium-dependent manner in vitro. Causes aggregation of liposomes in the presence of calcium, but not in its absence. Likely to promote membrane fusion. May provide structural integrity within the tegument. The protein is Annexin B22 of Schistosoma mansoni (Blood fluke).